A 692-amino-acid polypeptide reads, in one-letter code: Methionine--tRNA ligase (692 aa).

A 'HIGH' region motif is present at residues 12-22 (PYANGSFHIGH). Residues Cys143, Cys146, Cys156, and Cys159 each contribute to the Zn(2+) site. The 'KMSKS' region signature appears at 341 to 345 (KMSKS). An ATP-binding site is contributed by Lys344. The 107-residue stretch at 586–692 (DFAKIDLRIA…PGAQPGMRVR (107 aa)) folds into the tRNA-binding domain.

This sequence belongs to the class-I aminoacyl-tRNA synthetase family. MetG type 1 subfamily. In terms of assembly, homodimer. The cofactor is Zn(2+).

It is found in the cytoplasm. It catalyses the reaction tRNA(Met) + L-methionine + ATP = L-methionyl-tRNA(Met) + AMP + diphosphate. Functionally, is required not only for elongation of protein synthesis but also for the initiation of all mRNA translation through initiator tRNA(fMet) aminoacylation. This chain is Methionine--tRNA ligase, found in Bordetella bronchiseptica (strain ATCC BAA-588 / NCTC 13252 / RB50) (Alcaligenes bronchisepticus).